The sequence spans 150 residues: MLSALALSTSSLCLSRYPLRASTVFLASSNIPFPSVSASLARPVATSAIPERPDLLMSPHGGLKAMMYLPLTNSLHQSTCSWLTGPRGFSSPPLFRIRFLLLIMSDSISLTDITISPGTLYSARTLLLRAAVLALTRKPMSFLHFKAACW.

The interval 93-140 is apoptotic activity; the sequence is PLFRIRFLLLIMSDSISLTDITISPGTLYSARTLLLRAAVLALTRKPM.

Its function is as follows. Disrupts the host mitochondrial membrane potential and induces apoptosis probably by inducing host CASP8 and CASP9. This is Non-structural protein from Bos taurus (Bovine).